Consider the following 523-residue polypeptide: MILYAVLGAFAAFLLYMDVLYPFVIYPLRARWHKCGYIPRDLSWPLGIPLTLVVLSKLRKDMLLQFMAAQDLSRPYKTSLRQFLGKWVIATRDPENIKAVLSTKFNDFSLKERGNRMRHVIGDGIFTQDGAPWKHSRDMLRPQFTKDQISRVELLSHHIDVLIREIRKSGGNVELQRLFHLMTMDTATHFLFGESVGSLEVSGESKGIEITDPKTGEIVNTVDFVESYTFANKFALKKIILNDLEFLADLTEPSYKWHLRRVHTVMDHYVQLALKATEKYDPDDDSEKGEYYFSHELAKLTRDPLSLRDQLFNILIAGRDTTAATLSYAFHYLTKNPAIYAKVREDVLTVFPNGDASLATYEDLRKAKYLQMVIKEVLRLAPAVPLNTRAAVRDTYLPRGGGPAGNLPVFVPKGTAVNYPTYILHRDPDIYGADAYEFNPERWRPENKLPNSPMYSWGYIPFNGGPRICIGQQFALTEIALTMIKLVLEFERLEPADDFEPNLQDKSSLTVMVGGSGVRVKLS.

A helical transmembrane segment spans residues 5 to 25 (AVLGAFAAFLLYMDVLYPFVI). Position 469 (C469) interacts with heme.

It belongs to the cytochrome P450 family. It depends on heme as a cofactor.

The protein localises to the membrane. The enzyme catalyses an omega-methyl-long-chain fatty acid + reduced [NADPH--hemoprotein reductase] + O2 = an omega-hydroxy-long-chain fatty acid + oxidized [NADPH--hemoprotein reductase] + H2O + H(+). The catalysed reaction is (9Z,12Z)-octadecadienoate + reduced [NADPH--hemoprotein reductase] + O2 = 18-hydroxy-(9Z,12Z)-octadecadienoate + oxidized [NADPH--hemoprotein reductase] + H2O + H(+). It carries out the reaction (9Z)-octadecenoate + reduced [NADPH--hemoprotein reductase] + O2 = 18-hydroxy-(9Z)-octadecenoate + oxidized [NADPH--hemoprotein reductase] + H2O + H(+). It catalyses the reaction hexadecanoate + reduced [NADPH--hemoprotein reductase] + O2 = 16-hydroxyhexadecanoate + oxidized [NADPH--hemoprotein reductase] + H2O + H(+). The enzyme catalyses (9Z)-hexadecenoate + reduced [NADPH--hemoprotein reductase] + O2 = (9Z)-16-hydroxyhexadec-9-enoate + oxidized [NADPH--hemoprotein reductase] + H2O + H(+). The catalysed reaction is octadecanoate + reduced [NADPH--hemoprotein reductase] + O2 = 18-hydroxyoctadecanoate + oxidized [NADPH--hemoprotein reductase] + H2O + H(+). In terms of biological role, catalyzes the terminal (at the omega-position) hydroxylation of a fatty acid. Probably involved in alkane metabolism. Linoleic acid is the preferred substrate, but it acts on various other C-16, C-18 and C-20 saturated and unsaturated fatty acids, namely palmitic, palmitoleic, stearic, oleic, alpha-linoleic, arachidonic and myristic acid. The polypeptide is Cytochrome P450 52-N1 (Starmerella bombicola (Yeast)).